We begin with the raw amino-acid sequence, 351 residues long: MKNKKLLVMAGGTGGHVFPAIAVAQTLQKQEWDICWLGTKDRMEAQLVPKYGIPIRFIQISGLRGKGIKALLNAPFAIFRAVLQAKKIIQEEKPDAVLGMGGYVSGPAGVAAKLCGVPIILHEQNAIAGLTNKLLGKIATCVLQAFPTAFPHAEVVGNPVREDLFEMPNPDIRFSDREEKLRVLVVGGSQGARVLNHTLPKVVAQLADKLEFRHQVGKGAVEEVSQLYGENLEQVKITEFIDNMAEAYAWADVVICRSGALTVCEIAAVGAAAIFVPFQHKDRQQYLNAKYLSDVGAAKIIEQADLTPEILVNYLKNLTRENLLQMALKAKTMSMPNAAQRVAEVIKQYSN.

UDP-N-acetyl-alpha-D-glucosamine is bound by residues 13 to 15 (TGG), N125, R161, S189, I241, 260 to 265 (ALTVCE), and Q285.

It belongs to the glycosyltransferase 28 family. MurG subfamily.

It localises to the cell inner membrane. It catalyses the reaction di-trans,octa-cis-undecaprenyl diphospho-N-acetyl-alpha-D-muramoyl-L-alanyl-D-glutamyl-meso-2,6-diaminopimeloyl-D-alanyl-D-alanine + UDP-N-acetyl-alpha-D-glucosamine = di-trans,octa-cis-undecaprenyl diphospho-[N-acetyl-alpha-D-glucosaminyl-(1-&gt;4)]-N-acetyl-alpha-D-muramoyl-L-alanyl-D-glutamyl-meso-2,6-diaminopimeloyl-D-alanyl-D-alanine + UDP + H(+). It participates in cell wall biogenesis; peptidoglycan biosynthesis. In terms of biological role, cell wall formation. Catalyzes the transfer of a GlcNAc subunit on undecaprenyl-pyrophosphoryl-MurNAc-pentapeptide (lipid intermediate I) to form undecaprenyl-pyrophosphoryl-MurNAc-(pentapeptide)GlcNAc (lipid intermediate II). The polypeptide is UDP-N-acetylglucosamine--N-acetylmuramyl-(pentapeptide) pyrophosphoryl-undecaprenol N-acetylglucosamine transferase (Haemophilus influenzae (strain ATCC 51907 / DSM 11121 / KW20 / Rd)).